Consider the following 74-residue polypeptide: MSNALASKKKVSKNQVVFFDYRDERKLKRFINDQGKIIPRRITGLSAKEQSLLTHSIKWARFLAIIPYVADEYK.

It belongs to the bacterial ribosomal protein bS18 family. In terms of assembly, part of the 30S ribosomal subunit. Forms a tight heterodimer with protein bS6.

Binds as a heterodimer with protein bS6 to the central domain of the 16S rRNA, where it helps stabilize the platform of the 30S subunit. The protein is Small ribosomal subunit protein bS18 of Chlorobaculum tepidum (strain ATCC 49652 / DSM 12025 / NBRC 103806 / TLS) (Chlorobium tepidum).